Reading from the N-terminus, the 426-residue chain is MKSWISRPVPQLPGRMPAVRIFDTAVGAYSTLDATGEQSLYVCGITPYDATHMGHAASYVAFDLLNRAWRDGGQRVAYVQNVTDVDDPLLERATATGVDWRDLAASQIELFQTDMAALNVLAPDHYVGAVESIPEIVPAIERLLHLGLAYRVTGTPGEPDGDVYYDVEAASKHSAEAKDAWTLGSVSGLSETEMLELFAERGGDPGRRGKRQALDPLLWRVARDGEPSWAGGELGSGRPGWHIECTVIAQKYLPAPFTVQGGGSDLIFPHHEMGAGHAYSLTGVPLARHFAHAGMVGLDGEKMSKSKGNLVLVSKLRAAGEEPAAIRLAILAHHYRTDWSWTEAGFAQAKTRLAEWRDALTMAPGESAATLIAEMRSELANDLNAPGALAAVDRWAVAAKQQAGAGSPMDQALVSDAVNALLGVEL.

Residue Cys43 participates in Zn(2+) binding. L-cysteinyl-5'-AMP-binding positions include 43–46 (CGIT), Ser58, and 81–83 (NVT). The 'HIGH' region signature appears at 45 to 55 (ITPYDATHMGH). The 'ERGGDP' region motif lies at 200 to 205 (ERGGDP). Trp241 contacts L-cysteinyl-5'-AMP. Position 245 (Cys245) interacts with Zn(2+). Residue 263–265 (GSD) coordinates L-cysteinyl-5'-AMP. Residue His270 coordinates Zn(2+). L-cysteinyl-5'-AMP is bound at residue Val296. Positions 302–306 (KMSKS) match the 'KMSKS' region motif.

This sequence belongs to the class-I aminoacyl-tRNA synthetase family. MshC subfamily. Monomer. Zn(2+) is required as a cofactor.

The enzyme catalyses 1D-myo-inositol 2-amino-2-deoxy-alpha-D-glucopyranoside + L-cysteine + ATP = 1D-myo-inositol 2-(L-cysteinylamino)-2-deoxy-alpha-D-glucopyranoside + AMP + diphosphate + H(+). Its function is as follows. Catalyzes the ATP-dependent condensation of GlcN-Ins and L-cysteine to form L-Cys-GlcN-Ins. The polypeptide is L-cysteine:1D-myo-inositol 2-amino-2-deoxy-alpha-D-glucopyranoside ligase (Arthrobacter sp. (strain FB24)).